A 415-amino-acid polypeptide reads, in one-letter code: Beta-1,4-glucuronyltransferase 1 (415 aa).

At Met1 to Arg8 the chain is on the cytoplasmic side. The chain crosses the membrane as a helical; Signal-anchor for type II membrane protein span at residues Cys9–Leu36. Over His37–Cys415 the chain is Lumenal. N-linked (GlcNAc...) asparagine glycosylation occurs at Asn204. Positions 227 and 229 each coordinate Mn(2+). N-linked (GlcNAc...) asparagine glycosylation is present at Asn300.

Belongs to the glycosyltransferase 49 family. Interacts with LARGE1 and LARGE2. Mn(2+) serves as cofactor.

It is found in the golgi apparatus membrane. The enzyme catalyses 3-O-[beta-D-Xyl-(1-&gt;4)-Rib-ol-P-Rib-ol-P-3-beta-D-GalNAc-(1-&gt;3)-beta-D-GlcNAc-(1-&gt;4)-(O-6-P-alpha-D-Man)]-Thr-[protein] + UDP-alpha-D-glucuronate = 3-O-[beta-D-GlcA-(1-&gt;3)-beta-D-Xyl-(1-&gt;4)-Rib-ol-P-Rib-ol-P-3-beta-D-GalNAc-(1-&gt;3)-beta-D-GlcNAc-(1-&gt;4)-(O-6-P-alpha-D-Man)]-Thr-[protein] + UDP + H(+). The protein operates within protein modification; protein glycosylation. Functionally, beta-1,4-glucuronyltransferase involved in O-mannosylation of alpha-dystroglycan (DAG1). Transfers a glucuronic acid (GlcA) residue onto a xylose (Xyl) acceptor to produce the glucuronyl-beta-1,4-xylose-beta disaccharide primer, which is further elongated by LARGE1, during synthesis of phosphorylated O-mannosyl glycan. Phosphorylated O-mannosyl glycan is a carbohydrate structure present in alpha-dystroglycan (DAG1), which is required for binding laminin G-like domain-containing extracellular proteins with high affinity. Required for axon guidance; via its function in O-mannosylation of alpha-dystroglycan (DAG1). In Bos taurus (Bovine), this protein is Beta-1,4-glucuronyltransferase 1.